We begin with the raw amino-acid sequence, 173 residues long: Ferritin-1 heavy chain (173 aa).

The 150-residue stretch at 6 to 155 folds into the Ferritin-like diiron domain; it reads QNYHEECEAG…DYITNLIRVG (150 aa). Fe cation-binding residues include E23, E58, H61, E103, and Q137.

It belongs to the ferritin family. As to quaternary structure, oligomer of 24 subunits. The functional molecule forms a roughly spherical shell with a diameter of 12 nm and contains a central cavity into which the insoluble mineral iron core is deposited.

It catalyses the reaction 4 Fe(2+) + O2 + 4 H(+) = 4 Fe(3+) + 2 H2O. In terms of biological role, stores iron in a soluble, non-toxic, readily available form. Important for iron homeostasis. Has ferroxidase activity. Iron is taken up in the ferrous form and deposited as ferric hydroxides after oxidation. This is Ferritin-1 heavy chain (SCM-1) from Schistosoma mansoni (Blood fluke).